A 461-amino-acid chain; its full sequence is Cysteine--tRNA ligase (461 aa).

Zn(2+) is bound at residue cysteine 30. The 'HIGH' region signature appears at 32–42; the sequence is VTIYDLCHIGH. 3 residues coordinate Zn(2+): cysteine 211, histidine 236, and glutamate 240. Residues 268–272 carry the 'KMSKS' region motif; that stretch reads KMSKS. Lysine 271 lines the ATP pocket.

The protein belongs to the class-I aminoacyl-tRNA synthetase family. As to quaternary structure, monomer. Zn(2+) is required as a cofactor.

It localises to the cytoplasm. The catalysed reaction is tRNA(Cys) + L-cysteine + ATP = L-cysteinyl-tRNA(Cys) + AMP + diphosphate. This Shewanella putrefaciens (strain CN-32 / ATCC BAA-453) protein is Cysteine--tRNA ligase.